The sequence spans 314 residues: Glycerol-3-phosphate dehydrogenase [NAD(P)+] (314 aa).

NADPH is bound by residues F11, R30, and K96. Sn-glycerol 3-phosphate is bound by residues K96, G124, and S126. An NADPH-binding site is contributed by A128. 5 residues coordinate sn-glycerol 3-phosphate: K179, D232, S242, R243, and N244. K179 serves as the catalytic Proton acceptor. R243 lines the NADPH pocket. E264 is a binding site for NADPH.

This sequence belongs to the NAD-dependent glycerol-3-phosphate dehydrogenase family.

It localises to the cytoplasm. It catalyses the reaction sn-glycerol 3-phosphate + NAD(+) = dihydroxyacetone phosphate + NADH + H(+). The enzyme catalyses sn-glycerol 3-phosphate + NADP(+) = dihydroxyacetone phosphate + NADPH + H(+). It participates in membrane lipid metabolism; glycerophospholipid metabolism. Functionally, catalyzes the reduction of the glycolytic intermediate dihydroxyacetone phosphate (DHAP) to sn-glycerol 3-phosphate (G3P), the key precursor for phospholipid synthesis. The polypeptide is Glycerol-3-phosphate dehydrogenase [NAD(P)+] (Paracoccus denitrificans (strain Pd 1222)).